Consider the following 313-residue polypeptide: Protoheme IX farnesyltransferase (313 aa).

9 consecutive transmembrane segments (helical) span residues 22 to 42, 46 to 66, 98 to 118, 121 to 141, 150 to 170, 177 to 197, 223 to 243, 246 to 266, and 284 to 304; these read FALL…VGLM, IGVH…GGGA, GEAL…LALA, VFAG…YTMW, IVIG…AATG, WLMF…LALF, ILVY…TSVG, IYLT…VQIW, and FFKL…AEAL.

It belongs to the UbiA prenyltransferase family. Protoheme IX farnesyltransferase subfamily. Interacts with CtaA.

It is found in the cell inner membrane. The catalysed reaction is heme b + (2E,6E)-farnesyl diphosphate + H2O = Fe(II)-heme o + diphosphate. The protein operates within porphyrin-containing compound metabolism; heme O biosynthesis; heme O from protoheme: step 1/1. Its function is as follows. Converts heme B (protoheme IX) to heme O by substitution of the vinyl group on carbon 2 of heme B porphyrin ring with a hydroxyethyl farnesyl side group. This is Protoheme IX farnesyltransferase from Ruegeria sp. (strain TM1040) (Silicibacter sp.).